The following is an 82-amino-acid chain: Small ribosomal subunit protein bS20 (82 aa).

Over residues 1 to 11 (MANHKSALKRI) the composition is skewed to basic residues. Positions 1 to 20 (MANHKSALKRIRSNETKRLR) are disordered.

Belongs to the bacterial ribosomal protein bS20 family.

In terms of biological role, binds directly to 16S ribosomal RNA. The protein is Small ribosomal subunit protein bS20 of Christiangramia forsetii (strain DSM 17595 / CGMCC 1.15422 / KT0803) (Gramella forsetii).